The primary structure comprises 1181 residues: WD repeat-containing protein 35 (1181 aa).

WD repeat units lie at residues 4–43 (YLSK…VLKL), 61–100 (LSMN…VWML), 105–143 (WIEE…IVGS), 147–185 (NRIW…IYDN), 193–241 (MKLS…IMRH), and 246–288 (NPVL…IVQF).

Component of the IFT complex A (IFT-A) complex. IFT-A complex is divided into a core subcomplex composed of IFT122:IFT140:WDR19 which is associated with TULP3 and a peripheral subcomplex composed of IFT43:WDR35:TTC21B. Interacts directy with IFT122, ITF43 and TTC21B. Interacts with IFT43. Interacts with CFAP61.

The protein localises to the cytoplasm. The protein resides in the cytoskeleton. It localises to the microtubule organizing center. It is found in the centrosome. Its subcellular location is the cilium axoneme. The protein localises to the cilium basal body. In terms of biological role, as a component of the IFT complex A (IFT-A), a complex required for retrograde ciliary transport and entry into cilia of G protein-coupled receptors (GPCRs), it is involved in ciliogenesis and ciliary protein trafficking. May promote CASP3 activation and TNF-stimulated apoptosis. The sequence is that of WD repeat-containing protein 35 from Homo sapiens (Human).